Here is a 396-residue protein sequence, read N- to C-terminus: Beta-1,3-N-acetylglucosaminyltransferase radical fringe (396 aa).

The Cytoplasmic segment spans residues 1–6 (MNFSCL). Residues 7 to 27 (GLSKICFLVSVIFCTFLLLFI) traverse the membrane as a helical; Signal-anchor for type II membrane protein segment. Residues 28 to 396 (PKTKTPWRPR…THWCPPRKTR (369 aa)) are Lumenal-facing. N-linked (GlcNAc...) asparagine glycans are attached at residues Asn-49 and Asn-120. Arg-145 provides a ligand contact to substrate. Asn-184 carries N-linked (GlcNAc...) asparagine glycosylation. 2 disulfides stabilise this stretch: Cys-185-Cys-196 and Cys-214-Cys-277. Asp-218 contacts substrate. Asp-219 contributes to the Mn(2+) binding site. Residue Asp-307 is part of the active site. Residue His-331 coordinates Mn(2+). An intrachain disulfide couples Cys-381 to Cys-390.

The protein belongs to the glycosyltransferase 31 family. Requires Mn(2+) as cofactor. Detected in the mesanchymal region of the developing limb. Expressed in mesoderm but not in ectoderm with no evident boundary of expression.

Its subcellular location is the golgi apparatus membrane. It carries out the reaction 3-O-(alpha-L-fucosyl)-L-threonyl-[EGF-like domain protein] + UDP-N-acetyl-alpha-D-glucosamine = 3-O-(N-acetyl-beta-D-glucosaminyl-(1-&gt;3)-alpha-L-fucosyl)-L-threonyl-[EGF-like domain protein] + UDP + H(+). It catalyses the reaction 3-O-(alpha-L-fucosyl)-L-seryl-[EGF-like domain protein] + UDP-N-acetyl-alpha-D-glucosamine = 3-O-(N-acetyl-beta-D-glucosaminyl-(1-&gt;3)-alpha-L-fucosyl)-L-seryl-[EGF-like domain protein] + UDP + H(+). In terms of biological role, glycosyltransferase that initiates the elongation of O-linked fucose residues attached to EGF-like repeats in the extracellular domain of Notch molecules. Involved in forelimb development and in adult forelimb regeneration. The protein is Beta-1,3-N-acetylglucosaminyltransferase radical fringe (RFNG) of Notophthalmus viridescens (Eastern newt).